Reading from the N-terminus, the 429-residue chain is Serine--tRNA ligase (429 aa).

229-231 (TAE) serves as a coordination point for L-serine. ATP is bound at residue 260 to 262 (RSE). Position 283 (E283) interacts with L-serine. An ATP-binding site is contributed by 347–350 (EISS). An L-serine-binding site is contributed by S383.

This sequence belongs to the class-II aminoacyl-tRNA synthetase family. Type-1 seryl-tRNA synthetase subfamily. In terms of assembly, homodimer. The tRNA molecule binds across the dimer.

It localises to the cytoplasm. The catalysed reaction is tRNA(Ser) + L-serine + ATP = L-seryl-tRNA(Ser) + AMP + diphosphate + H(+). It carries out the reaction tRNA(Sec) + L-serine + ATP = L-seryl-tRNA(Sec) + AMP + diphosphate + H(+). It functions in the pathway aminoacyl-tRNA biosynthesis; selenocysteinyl-tRNA(Sec) biosynthesis; L-seryl-tRNA(Sec) from L-serine and tRNA(Sec): step 1/1. Catalyzes the attachment of serine to tRNA(Ser). Is also able to aminoacylate tRNA(Sec) with serine, to form the misacylated tRNA L-seryl-tRNA(Sec), which will be further converted into selenocysteinyl-tRNA(Sec). In Orientia tsutsugamushi (strain Ikeda) (Rickettsia tsutsugamushi), this protein is Serine--tRNA ligase.